The sequence spans 376 residues: Acetate kinase (376 aa).

Asn7 contributes to the Mg(2+) binding site. Lys14 is an ATP binding site. Arg71 contacts substrate. Asp128 functions as the Proton donor/acceptor in the catalytic mechanism. ATP is bound by residues His188 to Gly192, Asp262 to Arg264, and Gly310 to Asn314. Mg(2+) is bound at residue Glu364.

It belongs to the acetokinase family. As to quaternary structure, homodimer. Mg(2+) serves as cofactor. It depends on Mn(2+) as a cofactor.

The protein localises to the cytoplasm. It catalyses the reaction acetate + ATP = acetyl phosphate + ADP. It participates in metabolic intermediate biosynthesis; acetyl-CoA biosynthesis; acetyl-CoA from acetate: step 1/2. Functionally, catalyzes the formation of acetyl phosphate from acetate and ATP. Can also catalyze the reverse reaction. In Mycolicibacterium smegmatis (strain ATCC 700084 / mc(2)155) (Mycobacterium smegmatis), this protein is Acetate kinase.